The sequence spans 188 residues: Elongation factor P (188 aa).

Position 34 is an N6-(3,6-diaminohexanoyl)-5-hydroxylysine (Lys-34).

Belongs to the elongation factor P family. In terms of processing, is beta-lysylated on the epsilon-amino group of Lys-34 by the combined action of EpmA and EpmB, and then hydroxylated on the C5 position of the same residue by EpmC. Lysylation is critical for the stimulatory effect of EF-P on peptide-bond formation. The lysylation moiety would extend toward the peptidyltransferase center and stabilize the terminal 3-CCA end of the tRNA. The hydroxylation of the C5 position on Lys-34 would allow additional potential stabilizing hydrogen-bond interactions with the P-tRNA.

It is found in the cytoplasm. It participates in protein biosynthesis; polypeptide chain elongation. Involved in peptide bond synthesis. Alleviates ribosome stalling that occurs when 3 or more consecutive Pro residues or the sequence PPG is present in a protein, possibly by augmenting the peptidyl transferase activity of the ribosome. Modification of Lys-34 is required for alleviation. The polypeptide is Elongation factor P (Salmonella arizonae (strain ATCC BAA-731 / CDC346-86 / RSK2980)).